Reading from the N-terminus, the 320-residue chain is Pantothenate kinase (320 aa).

Position 96 to 103 (96 to 103 (GSVAVGKS)) interacts with ATP.

Belongs to the prokaryotic pantothenate kinase family.

The protein resides in the cytoplasm. It catalyses the reaction (R)-pantothenate + ATP = (R)-4'-phosphopantothenate + ADP + H(+). It functions in the pathway cofactor biosynthesis; coenzyme A biosynthesis; CoA from (R)-pantothenate: step 1/5. The protein is Pantothenate kinase of Brevibacillus brevis (strain 47 / JCM 6285 / NBRC 100599).